The chain runs to 354 residues: Polyprenal reductase 1 (354 aa).

6 consecutive transmembrane segments (helical) span residues 11–31 (PLLC…ALPI), 78–98 (FMHF…AIWF), 141–158 (YHVW…IQVL), 176–196 (MHIV…LSLA), 235–255 (PLLK…WGSL), and 301–321 (GMLV…VFVI).

The protein belongs to the steroid 5-alpha reductase family. Polyprenal reductase subfamily.

The protein resides in the cell membrane. It catalyses the reaction a di-trans,poly-cis-dolichal + NADP(+) = a di-trans,poly-cis-polyprenal + NADPH + H(+). It functions in the pathway protein modification; protein glycosylation. Plays a key role in early steps of protein N-linked glycosylation by being involved in the conversion of polyprenol into dolichol. Acts as a polyprenal reductase that mediates the reduction of polyprenal into dolichal in a NADP-dependent mechanism. Dolichols are required for the synthesis of dolichol-linked monosaccharides and the oligosaccharide precursor used for N-glycosylation. The polypeptide is Polyprenal reductase 1 (Oryza sativa subsp. indica (Rice)).